Reading from the N-terminus, the 259-residue chain is Proteasome subunit alpha 1 (259 aa).

The disordered stretch occupies residues 231-259 (LVPAEPAAASESAPEPKPDTETKPADTQD). Positions 233–243 (PAEPAAASESA) are enriched in low complexity. The segment covering 244 to 259 (PEPKPDTETKPADTQD) has biased composition (basic and acidic residues).

This sequence belongs to the peptidase T1A family. The 20S proteasome core is composed of 14 alpha and 14 beta subunits that assemble into four stacked heptameric rings, resulting in a barrel-shaped structure. The two inner rings, each composed of seven catalytic beta subunits, are sandwiched by two outer rings, each composed of seven alpha subunits. All four combinations of alpha- and beta-subunits (beta2-alpha1, beta2-alpha2, beta1-alpha2 and beta1-alpha1) yield fully assembled and proteolytically active proteasomes. The catalytic chamber with the active sites is on the inside of the barrel. Has probably a gated structure, the ends of the cylinder being occluded by the N-termini of the alpha-subunits. Is likely capped by the proteasome-associated ATPase, ARC. Post-translationally, the N-terminus is blocked.

It is found in the cytoplasm. Its pathway is protein degradation; proteasomal Pup-dependent pathway. Its activity is regulated as follows. The formation of the proteasomal ATPase ARC-20S proteasome complex, likely via the docking of the C-termini of ARC into the intersubunit pockets in the alpha-rings, may trigger opening of the gate for substrate entry. Interconversion between the open-gate and close-gate conformations leads to a dynamic regulation of the 20S proteasome proteolysis activity. Its function is as follows. Component of the proteasome core, a large protease complex with broad specificity involved in protein degradation. The R.erythropolis proteasomes are able to cleave oligopeptides after Tyr, Phe and Leu, very poorly after Arg but not after Glu. Thus, displays chymotrypsin-like activity, low trypsin-like activity but no caspase-like activity. The polypeptide is Proteasome subunit alpha 1 (Rhodococcus erythropolis (Arthrobacter picolinophilus)).